A 521-amino-acid polypeptide reads, in one-letter code: Lymphocyte activation gene 3 protein (521 aa).

A signal peptide spans 1–23 (MREDLLLGFLLLGLLWEAPVVSS). Residues 24–442 (GPGKELPVVW…ISGDLKGGHL (419 aa)) lie on the Extracellular side of the membrane. The region spanning 37-163 (GAPVHLPCSL…LSCSLRLRVG (127 aa)) is the Ig-like V-type domain. The interval 37–246 (GAPVHLPCSL…LTYRDGFNVS (210 aa)) is interaction with FGL1. The cysteines at positions 44 and 156 are disulfide-linked. Ig-like C2-type domains follow at residues 165–246 (ASMI…FNVS), 258–341 (PVAP…ATVT), and 345–412 (ITVT…EGQR). N-linked (GlcNAc...) asparagine glycosylation is present at asparagine 184. An intrachain disulfide couples cysteine 185 to cysteine 235. N-linked (GlcNAc...) asparagine glycans are attached at residues asparagine 244, asparagine 309, asparagine 337, and asparagine 381. A disulfide bridge connects residues cysteine 276 and cysteine 327. Cysteine 363 and cysteine 405 are oxidised to a cystine. The connecting peptide stretch occupies residues 422–442 (ESSSGAHSARRISGDLKGGHL). The helical transmembrane segment at 443–463 (VLVLILGALSLFLLVAGAFGF) threads the bilayer. At 464–521 (HWWRKQLLLRRFSALEHGIQPFPAQRKIEELERELETEMGQEPEPEPEPQLEPEPRQL) the chain is on the cytoplasmic side. The short motif at 490–495 (KIEELE) is the KIEELE motif element. The interval 493–518 (ELERELETEMGQEPEPEPEPQLEPEP) is 13 X 2 AA tandem repeats of E-X. Residues 493-521 (ELERELETEMGQEPEPEPEPQLEPEPRQL) are disordered. Acidic residues predominate over residues 500-514 (TEMGQEPEPEPEPQL).

Belongs to the LAG3 family. As to quaternary structure, interacts with MHC class II (MHC-II); selectively recognizes stable complexes of peptide and MHC-II. Interacts with FGL1 (via the Fibrinogen C-terminal domain). Proteolytically cleaved by ADAM10 and ADAM17 within the connecting peptide region, leading to release of Secreted lymphocyte activation gene 3 protein (sLAG-3). ADAM10 mediates constitutive cleavage, but cleavage increases following T-cell activation, whereas shedding by ADAM17 is induced by TCR signaling in a PRKCQ-dependent manner. In terms of tissue distribution, primarily expressed in activated CD4(+) and CD8(+) T-cells. Also expressed in a subset of regulatory T-cells (Tregs), such as natural CD4(+)CD25(+) Tregs. Also expressed on plasmacytoid dendritic cells (pDCs).

It localises to the cell membrane. It is found in the secreted. Functionally, lymphocyte activation gene 3 protein: Inhibitory receptor on antigen activated T-cells. Delivers inhibitory signals upon binding to ligands, such as FGL1. FGL1 constitutes a major ligand of LAG3 and is responsible for LAG3 T-cell inhibitory function. Following TCR engagement, LAG3 associates with CD3-TCR in the immunological synapse and directly inhibits T-cell activation. May inhibit antigen-specific T-cell activation in synergy with PDCD1/PD-1, possibly by acting as a coreceptor for PDCD1/PD-1. Negatively regulates the proliferation, activation, effector function and homeostasis of both CD8(+) and CD4(+) T-cells. Also mediates immune tolerance: constitutively expressed on a subset of regulatory T-cells (Tregs) and contributes to their suppressive function. Also acts as a negative regulator of plasmacytoid dendritic cell (pDCs) activation. Binds MHC class II (MHC-II); the precise role of MHC-II-binding is however unclear. In terms of biological role, may function as a ligand for MHC class II (MHC-II) on antigen-presenting cells (APC), promoting APC activation/maturation and driving Th1 immune response. The chain is Lymphocyte activation gene 3 protein from Mus musculus (Mouse).